The following is a 205-amino-acid chain: Small ribosomal subunit protein uS4 (205 aa).

An S4 RNA-binding domain is found at 95–158; it reads SRLDNIVYRM…TKSPLVKNFI (64 aa).

Belongs to the universal ribosomal protein uS4 family. Part of the 30S ribosomal subunit. Contacts protein S5. The interaction surface between S4 and S5 is involved in control of translational fidelity.

Functionally, one of the primary rRNA binding proteins, it binds directly to 16S rRNA where it nucleates assembly of the body of the 30S subunit. With S5 and S12 plays an important role in translational accuracy. This chain is Small ribosomal subunit protein uS4, found in Mycoplasma genitalium (strain ATCC 33530 / DSM 19775 / NCTC 10195 / G37) (Mycoplasmoides genitalium).